The chain runs to 431 residues: MLDPNLLRNELDAVAEKLLARRGFKLDVETLRKQEERRKVLQVETENLQAERNSRSKEIGAAKARGEDIEPLRREVNTLGEKLDAAKAELDQLQNEIRDLALTIPNLPDDSVPLGKDDTQNQEVTRWGEPRKYDFPVRDHVELGEMAAGLDFAAAVKLTGARFVVMKGQIARLHRALSQFMLDLHTQQHAYQEAYVPYLVNHATLYGTGQLPKFGEDLFHTNPLSEEAESSQYALIPTAEVPLTNLVRDEILDEESLPLKMTAHTPCFRSEAGSYGRDTRGLIRMHQFDKVELVQIVRPEDSMQALEELTTHAETVLQLLKLPYRKVLLCTGDMGFGSTKTYDLEVWLPAQDTYREISSCSNMWDFQARRMQARCRSKSDKKTRLVHTLNGSGLAVGRTLVAVLENYQQADGRIEIPEVLRPYMGGLEFIG.

238–240 (TAE) provides a ligand contact to L-serine. 269 to 271 (RSE) serves as a coordination point for ATP. Glutamate 292 contacts L-serine. 356-359 (EISS) provides a ligand contact to ATP. Serine 392 contributes to the L-serine binding site.

Belongs to the class-II aminoacyl-tRNA synthetase family. Type-1 seryl-tRNA synthetase subfamily. Homodimer. The tRNA molecule binds across the dimer.

The protein localises to the cytoplasm. It catalyses the reaction tRNA(Ser) + L-serine + ATP = L-seryl-tRNA(Ser) + AMP + diphosphate + H(+). The enzyme catalyses tRNA(Sec) + L-serine + ATP = L-seryl-tRNA(Sec) + AMP + diphosphate + H(+). Its pathway is aminoacyl-tRNA biosynthesis; selenocysteinyl-tRNA(Sec) biosynthesis; L-seryl-tRNA(Sec) from L-serine and tRNA(Sec): step 1/1. Functionally, catalyzes the attachment of serine to tRNA(Ser). Is also able to aminoacylate tRNA(Sec) with serine, to form the misacylated tRNA L-seryl-tRNA(Sec), which will be further converted into selenocysteinyl-tRNA(Sec). The polypeptide is Serine--tRNA ligase (Pectobacterium carotovorum subsp. carotovorum (strain PC1)).